Reading from the N-terminus, the 316-residue chain is Na(+)/H(+) exchange regulatory cofactor NHE-RF2 (316 aa).

Residues 11-91 (LCRLVRGEQG…ETRLLVVDKE (81 aa)) form the PDZ 1 domain. The segment at 109–148 (QRGLPPAHDPWEPKPDWARAGSLSSDAGQKDVNGPPRELR) is disordered. A phosphoserine mark is found at Ser130, Ser183, and Ser254. In terms of domain architecture, PDZ 2 spans 151–231 (LCHLRKGPQG…EARLLLVDPE (81 aa)). The disordered stretch occupies residues 244 to 303 (TEEHVEGPLPSPITNGTSPAQDASAWKRDPFQESGLHLSPTAAEAKEKARATRVNKRAPQ). The span at 255–264 (PITNGTSPAQ) shows a compositional bias: polar residues. Position 282 is a phosphoserine (Ser282).

Homodimer, and heterodimer with NHERF1. Binds ADRB2, SLC9A3, P2RY1, P2YR2, SRY, RDX, PDZK1 and LPAR2. Found in a complex with EZR, PODXL and NHERF2. Interacts (via the PDZ domains) with PODXL (via the C-terminal PDZ-binding motif DTHL); interaction is detected in glomerular epithelium cells. Binds PODXL. Interacts with SGK1 and KCNJ1/ROMK1. Interacts (via the PDZ domains) with SLC26A6. As to expression, detected in kidney glomeruli.

The protein localises to the endomembrane system. It localises to the nucleus. Its subcellular location is the apical cell membrane. In terms of biological role, scaffold protein that connects plasma membrane proteins with members of the ezrin/moesin/radixin family and thereby helps to link them to the actin cytoskeleton and to regulate their surface expression. Necessary for cAMP-mediated phosphorylation and inhibition of SLC9A3. May also act as scaffold protein in the nucleus. The polypeptide is Na(+)/H(+) exchange regulatory cofactor NHE-RF2 (NHERF2) (Oryctolagus cuniculus (Rabbit)).